The chain runs to 1117 residues: RNA-directed RNA polymerase (1117 aa).

Polar residues predominate over residues 1–17 (MTVSGRSSWQNGKTTNA). Residues 1-23 (MTVSGRSSWQNGKTTNAMRAGKL) form a disordered region.

The enzyme catalyses RNA(n) + a ribonucleoside 5'-triphosphate = RNA(n+1) + diphosphate. In terms of biological role, RNA-dependent RNA polymerase which replicates the viral genome. The protein is RNA-directed RNA polymerase (p1) of Penicillium chrysogenum (Penicillium notatum).